A 400-amino-acid polypeptide reads, in one-letter code: MAKQKFERTKPHVNVGTIGHVDHGKTTLTAAITLILSKAGLAQAKGYDEIDKAPEEKARGITINTTHVEYETAKRHYAHVDCPGHADYVKNMITGAAQMDGAILVVSAADGPMPQTREHILLARQVGVPYIVVFLNKADMVDDPELIELVEMEVRDLLNQYEFPGDETPIVVGSALKALECGCGKRECQWCGKIWELMDVVDEYIPTPERDIDKPFLMPVEDVFSITGRGTVATGRVERGKVKVGDEVEIIGLTTESRKTVVTGVEMFRKTLDEAQAGDNIGVLLRGIQKDEVERGQVLAKPGTIKPHTKFEAQVYVLTKEEGGRHTPFFNGYRPQFYFRTTDVTGTIQLPEGVEMVMPGDHVTLRVELITPIAMEEGLKFAIREGGRTVGAGVVSAIIE.

In terms of domain architecture, tr-type G spans 10–209 (KPHVNVGTIG…VVDEYIPTPE (200 aa)). The tract at residues 19-26 (GHVDHGKT) is G1. 19 to 26 (GHVDHGKT) lines the GTP pocket. Position 26 (Thr-26) interacts with Mg(2+). Residues 60–64 (GITIN) are G2. The segment at 81–84 (DCPG) is G3. GTP-binding positions include 81-85 (DCPGH) and 136-139 (NKAD). The segment at 136–139 (NKAD) is G4. The segment at 174-176 (SAL) is G5.

Belongs to the TRAFAC class translation factor GTPase superfamily. Classic translation factor GTPase family. EF-Tu/EF-1A subfamily. Monomer.

The protein resides in the cytoplasm. It carries out the reaction GTP + H2O = GDP + phosphate + H(+). In terms of biological role, GTP hydrolase that promotes the GTP-dependent binding of aminoacyl-tRNA to the A-site of ribosomes during protein biosynthesis. In Caldanaerobacter subterraneus subsp. tengcongensis (strain DSM 15242 / JCM 11007 / NBRC 100824 / MB4) (Thermoanaerobacter tengcongensis), this protein is Elongation factor Tu-B.